We begin with the raw amino-acid sequence, 210 residues long: Leucyl/phenylalanyl-tRNA--protein transferase (210 aa).

It belongs to the L/F-transferase family.

The protein resides in the cytoplasm. It carries out the reaction N-terminal L-lysyl-[protein] + L-leucyl-tRNA(Leu) = N-terminal L-leucyl-L-lysyl-[protein] + tRNA(Leu) + H(+). It catalyses the reaction N-terminal L-arginyl-[protein] + L-leucyl-tRNA(Leu) = N-terminal L-leucyl-L-arginyl-[protein] + tRNA(Leu) + H(+). The catalysed reaction is L-phenylalanyl-tRNA(Phe) + an N-terminal L-alpha-aminoacyl-[protein] = an N-terminal L-phenylalanyl-L-alpha-aminoacyl-[protein] + tRNA(Phe). Its function is as follows. Functions in the N-end rule pathway of protein degradation where it conjugates Leu, Phe and, less efficiently, Met from aminoacyl-tRNAs to the N-termini of proteins containing an N-terminal arginine or lysine. This is Leucyl/phenylalanyl-tRNA--protein transferase from Ruegeria sp. (strain TM1040) (Silicibacter sp.).